A 686-amino-acid chain; its full sequence is Putative cuticle collagen 99 (686 aa).

2 disordered regions span residues 42–79 (PPIG…PVGP) and 163–444 (GPIG…SLVA). Over residues 67–79 (PPGPPGERGPVGP) the composition is skewed to pro residues. 3 triple-helical region regions span residues 142 to 201 (GMPG…KGDR), 230 to 263 (GPPG…GFDG), and 268 to 296 (GPKG…EKGD). Pro residues predominate over residues 231 to 243 (PPGPPGPPGPPGP). Residues 246–256 (RDGRHGMKGDR) are compositionally biased toward basic and acidic residues. Residues 306–318 (GQSVSTVSSSGSQ) are compositionally biased toward low complexity. 2 stretches are compositionally biased toward basic and acidic residues: residues 361 to 373 (EKGE…ETGD) and 401 to 417 (RDGR…HGLR). The interval 394–439 (GPPGPPGRDGRPGEKGEKGEHGLRGDMGLPGPEGTPGKRGRRGRHG) is triple-helical region. N-linked (GlcNAc...) asparagine glycans are attached at residues Asn446 and Asn535. A disordered region spans residues 475–650 (KNVIPGPPGP…TGPDGLPLPY (176 aa)). Triple-helical region stretches follow at residues 479–536 (PGPP…SGNQ), 538–576 (GPRG…PGPM), and 577–636 (GLRG…PGLD). The span at 540 to 549 (RGPPGLPGPP) shows a compositional bias: pro residues. The segment covering 563-581 (QPGALGLPGHPGPMGLRGP) has biased composition (low complexity).

Belongs to the cuticular collagen family. As to quaternary structure, collagen polypeptide chains are complexed within the cuticle by disulfide bonds and other types of covalent cross-links.

Its function is as follows. Nematode cuticles are composed largely of collagen-like proteins. The cuticle functions both as an exoskeleton and as a barrier to protect the worm from its environment. The protein is Putative cuticle collagen 99 of Caenorhabditis briggsae.